The primary structure comprises 367 residues: uncharacterized protein (367 aa).

An FAD-binding PCMH-type domain is found at 1–96 (ITLHRLAELV…LTATLQLQPV (96 aa)).

To M.tuberculosis Rv3790.

This is an uncharacterized protein from Streptomyces coelicolor.